We begin with the raw amino-acid sequence, 348 residues long: Keratocan (348 aa).

An N-terminal signal peptide occupies residues 1–26 (MSRLNLTMEVLLVAFVAVFLTSQVHS). The LRRNT domain occupies 40–69 (ACPKECNCPPNFPNAVYCDNKGLKSIPVIP). 2 disulfide bridges follow: Cys41–Cys47 and Cys45–Cys57. 10 LRR repeats span residues 70 to 92 (PYTW…ALRN), 93 to 118 (ATQL…ALRA), 119 to 140 (MSNL…SPLP), 141 to 163 (AKLE…VFSG), 165 to 189 (GHLT…SLKG), 190 to 213 (LNNL…LPPT), 215 to 234 (TQIF…YFKG), 235 to 260 (LPKV…VFNL), 262 to 280 (SILD…PVIS), and 281 to 303 (SGLE…DICP). N-linked (GlcNAc...) (keratan sulfate) asparagine glycosylation occurs at Asn92. N-linked (GlcNAc...) (keratan sulfate) asparagine glycosylation is present at Asn259. N-linked (GlcNAc...) asparagine glycosylation is present at Asn297. The cysteines at positions 302 and 339 are disulfide-linked.

Belongs to the small leucine-rich proteoglycan (SLRP) family. SLRP class II subfamily. Glycosylated. Contains keratan sulfate chains. In terms of tissue distribution, expressed in eye, where it is found in the corneal epithelial layer and to a lesser extent in the stromal layer (at protein level).

It localises to the secreted. Its subcellular location is the extracellular space. The protein resides in the extracellular matrix. May be important in developing and maintaining corneal transparency and for the structure of the stromal matrix. This chain is Keratocan, found in Danio rerio (Zebrafish).